The primary structure comprises 542 residues: Protein MGF 505-11L (542 aa).

This sequence belongs to the asfivirus MGF 505 family.

Functionally, plays a role in virus cell tropism, and may be required for efficient virus replication in macrophages. This chain is Protein MGF 505-11L, found in African swine fever virus (isolate Tick/Malawi/Lil 20-1/1983) (ASFV).